The chain runs to 388 residues: MVSIMNKNELITEILKNEVVKALGCTEVGLIGYTVAKAKPEDLYSIKEIKLILDKGTFKNAFSVGVPNTNKFGILPAVVGGLLGREENKLEVFKDIKYDEKLEEFIENKLKIEVIDSDVYCKVIIKANKVYEAETKGSHSGKSLSDDLKNAYKSLTLKDFIDYIEDIPEEVIKIIKETIETNKNLSTPEVPEDFISLDLKDEILNHMLKKTVSAVYNRMIGINKPAMAIAGSGNMGLTATLPIIAYDEIKGHDEEKLTKSITLSALTTIYSAYHSSYISAMCGCVNRGGIGAVSGLSYYIFGFDRIEESIKSFTANLPGIVCDGGKIGCALKIASGVFAIYLSLFSKVPYTNGIVGKDFKECIENIGKIGKAMKPVDDEIIEILKNKK.

Catalysis depends on C25, which acts as the Proton acceptor. [4Fe-4S] cluster is bound by residues C282, C322, and C329.

This sequence belongs to the L-cysteine desulfidase family. As to quaternary structure, homotrimer. [4Fe-4S] cluster is required as a cofactor.

The enzyme catalyses L-cysteine + H2O = hydrogen sulfide + pyruvate + NH4(+) + H(+). In terms of biological role, catalyzes the cleavage of L-cysteine to form 2-aminoprop-2-enoate and sulfide. The former then spontaneously hydrolyzes to pyruvate and NH(3). May be responsible for the production of sulfide required for the biosynthesis of iron-sulfur centers in this archaea. Is very specific for L-cysteine, with no activity being detected with D-cysteine, L-homocysteine, 3-mercaptopropionate (cysteine without the amino group), cysteamine (cysteine without the carboxylate), or mercaptolactate (the hydroxyl analog of cysteine). The protein is L-cysteine desulfidase of Methanocaldococcus jannaschii (strain ATCC 43067 / DSM 2661 / JAL-1 / JCM 10045 / NBRC 100440) (Methanococcus jannaschii).